A 302-amino-acid polypeptide reads, in one-letter code: Vacuolar protein sorting-associated protein 26A (302 aa).

This sequence belongs to the VPS26 family. Component of the retromer complex which consists of VPS29 (MAG1), VPS26 (VPS26A or VPS26B), VPS35 (VPS35A or VPS35B or VPS35C), VPS5/17 (SNX1 or SNX2A or SNX2B). Component of a retromer subcomplex consisting of VPS29 (MAG1), VPS26 (VPS26A or VPS26B), VPS35 (VPS35A or VPS35B or VPS35C).

It localises to the cytoplasm. Its subcellular location is the endosome membrane. The protein localises to the prevacuolar compartment membrane. It is found in the golgi apparatus. The protein resides in the trans-Golgi network membrane. Its function is as follows. Plays a role in vesicular protein sorting. Component of the membrane-associated retromer complex which is essential in endosome-to-Golgi retrograde transport. The VPS29-VPS26-VPS35 subcomplex may be involved in recycling of specific cargos from endosome to the plasma membrane. In Arabidopsis thaliana (Mouse-ear cress), this protein is Vacuolar protein sorting-associated protein 26A (VPS26A).